The chain runs to 196 residues: Large ribosomal subunit protein uL14my (196 aa).

The N-terminal 62 residues, 1–62 (MATALASKLS…TILKCVDNSC (62 aa)), are a transit peptide targeting the mitochondrion. Residues 148–175 (EKKGQNNSHGSKRKMEYNQPTGTRVFGP) are disordered.

This sequence belongs to the universal ribosomal protein uL14 family. As to quaternary structure, part of the mitochondrial 50S ribosomal subunit. Mostly expressed in pistils and inflorescences, including floral organs and meristems, and, to a lower extent, in leaves.

It is found in the mitochondrion. In terms of biological role, binds to 23S rRNA in mitochondrion. Required for the formation of the proximal region of the ovule primordium during floral organogenesis, thus participating in patterning and growth of ovule. Also regulates the initiation and/or maintenance of integument and embryo sac ontogenesis. Prevents inappropriate cell death in the young ovule. This chain is Large ribosomal subunit protein uL14my (HLL), found in Arabidopsis thaliana (Mouse-ear cress).